Reading from the N-terminus, the 287-residue chain is 4-hydroxybenzoate octaprenyltransferase (287 aa).

The next 9 helical transmembrane spans lie at 22-42 (IGTL…AQGF), 45-65 (LGVL…GCVI), 91-111 (TSTE…LLVL), 114-134 (NSLT…YPFM), 139-159 (QLPQ…AFAA), 161-181 (ANAL…WTIA), 212-232 (IIIA…GWLE), 236-256 (WIYF…QLQI), and 267-287 (AFLD…LGYL).

It belongs to the UbiA prenyltransferase family. Mg(2+) is required as a cofactor.

The protein resides in the cell inner membrane. The enzyme catalyses all-trans-octaprenyl diphosphate + 4-hydroxybenzoate = 4-hydroxy-3-(all-trans-octaprenyl)benzoate + diphosphate. The protein operates within cofactor biosynthesis; ubiquinone biosynthesis. Its function is as follows. Catalyzes the prenylation of para-hydroxybenzoate (PHB) with an all-trans polyprenyl group. Mediates the second step in the final reaction sequence of ubiquinone-8 (UQ-8) biosynthesis, which is the condensation of the polyisoprenoid side chain with PHB, generating the first membrane-bound Q intermediate 3-octaprenyl-4-hydroxybenzoate. The protein is 4-hydroxybenzoate octaprenyltransferase of Psychromonas ingrahamii (strain DSM 17664 / CCUG 51855 / 37).